The following is an 870-amino-acid chain: DNA polymerase kappa (870 aa).

Residues I103–G358 form the UmuC domain. Residues D107, D198, and E199 each coordinate Mg(2+). UBZ4-type zinc fingers lie at residues I621–S651 and A776–F806. C624, C627, H642, C646, C779, C782, H797, and C801 together coordinate Zn(2+). The interval N816–P858 is disordered.

This sequence belongs to the DNA polymerase type-Y family. Interacts with REV1. Interacts with PCNA. Mg(2+) is required as a cofactor. The cofactor is Mn(2+). Detected at low levels in testis, spleen, prostate and ovary. Detected at very low levels in kidney, colon, brain, heart, liver, lung, placenta, pancreas and peripheral blood leukocytes.

The protein localises to the nucleus. The enzyme catalyses DNA(n) + a 2'-deoxyribonucleoside 5'-triphosphate = DNA(n+1) + diphosphate. Functionally, DNA polymerase specifically involved in DNA repair. Plays an important role in translesion synthesis, where the normal high-fidelity DNA polymerases cannot proceed and DNA synthesis stalls. Depending on the context, it inserts the correct base, but causes frequent base transitions, transversions and frameshifts. Lacks 3'-5' proofreading exonuclease activity. Forms a Schiff base with 5'-deoxyribose phosphate at abasic sites, but does not have lyase activity. This chain is DNA polymerase kappa (POLK), found in Homo sapiens (Human).